The following is a 445-amino-acid chain: Proton extrusion protein PxcA (445 aa).

4 consecutive transmembrane segments (helical) span residues 227–247 (FILL…TFLI), 322–342 (AIAN…VVAF), 369–389 (LIIL…WEVI), and 405–425 (FNFL…KYWI).

This sequence belongs to the CemA family.

It localises to the cell inner membrane. In terms of biological role, required for H(+) efflux immediately after light irradiation to form a rapid H(+) concentration gradient across the thylakoid membranes. Together with PxcL, contributes to transient H(+) uptake following dark to light transition. The chain is Proton extrusion protein PxcA from Microcystis aeruginosa (strain NIES-843 / IAM M-2473).